Consider the following 340-residue polypeptide: Deubiquitinase SseL (340 aa).

The active site involves histidine 223. Cysteine 285 acts as the Nucleophile in catalysis.

The protein belongs to the peptidase C79 family.

It localises to the secreted. The protein localises to the host cytoplasm. Its function is as follows. Effector proteins function to alter host cell physiology and promote bacterial survival in host tissues. This protease targets the host cell ubiquitin pathway by acting as a deubiquitinase in infected host cells. This Salmonella paratyphi B (strain ATCC BAA-1250 / SPB7) protein is Deubiquitinase SseL (sseL).